A 4118-amino-acid polypeptide reads, in one-letter code: BEACH domain-containing protein lvsB (4118 aa).

Residues 1-35 (MNRNFNNINNNNNNNNNYHGYQYHQQQQQQNQQQQ) are disordered. A helical membrane pass occupies residues 198–218 (GIPLSFLNFLITILLRILSLP). Residues 236–257 (NFSGNNNNNFNNNNHYFNNNHN) show a composition bias toward low complexity. Disordered regions lie at residues 236 to 267 (NFSGNNNNNFNNNNHYFNNNHNNHNHHYQHHQ), 332 to 382 (PLSS…SKNN), and 621 to 644 (ISSSDNNNNNNNNSDGVNDDKNNN). Residues 258 to 267 (NHNHHYQHHQ) show a composition bias toward basic residues. Composition is skewed to low complexity over residues 332–381 (PLSS…NSKN) and 621–636 (ISSSDNNNNNNNNSDG). A helical transmembrane segment spans residues 827-847 (YLVLYMIVTEILSLLLELLVP). Low complexity predominate over residues 1155-1170 (NGGSISPSSIINNMNS). 11 disordered regions span residues 1155 to 1213 (NGGS…FNNN), 1599 to 1622 (ANTTTNSTTASTTTTTTNSTTAVS), 1643 to 1681 (NSGISRENSLGGRDSIGSNSSSSSSSSNSGVSSGSSTNL), 1928 to 1968 (GNFL…ISSS), 2015 to 2044 (STNNNSNNSNNSNSNNNNNNNNTNYNSNSL), 2537 to 2574 (RRGSSSSSTNSTTNNNNNNSSTTTTSNNNNNNNENNNE), 2702 to 2741 (FSPSRSKEKEKEKEKEKEKEKEKEKERERERETTNVTSDS), 2754 to 2791 (DQSNEESSTTDSDSTSDNNNNNNRNSYSGRNIRGNGIN), 2902 to 3007 (NTNS…NSNE), 3245 to 3265 (PLIPDLSTPSTPPSPQNTKDQ), and 3348 to 3418 (KTTA…NIVK). Composition is skewed to low complexity over residues 1657–1678 (SIGSNSSSSSSSSNSGVSSGSS) and 1935–1968 (SSSNNNLRERSINNNNNNNNNSNNNNNNNSISSS). The span at 2540 to 2571 (SSSSSTNSTTNNNNNNSSTTTTSNNNNNNNEN) shows a compositional bias: low complexity. The stretch at 2705-2738 (SRSKEKEKEKEKEKEKEKEKEKERERERETTNVT) forms a coiled coil. The segment covering 2706–2734 (RSKEKEKEKEKEKEKEKEKEKERERERET) has biased composition (basic and acidic residues). 2 stretches are compositionally biased toward low complexity: residues 2758–2791 (EESSTTDSDSTSDNNNNNNRNSYSGRNIRGNGIN) and 2902–2947 (NTNS…NSTN). Over residues 2948–2962 (QTITDTTLSPASSNV) the composition is skewed to polar residues. 2 stretches are compositionally biased toward low complexity: residues 2963–2980 (SISNQSTPISNNNNNNNS) and 2988–3006 (SNINIPPTINISDSNSNSN). The 177-residue stretch at 3303 to 3479 (KLGEKVNEVF…DRDIVYDLIM (177 aa)) folds into the BEACH-type PH domain. The segment covering 3357–3411 (SNNNNNNNNNNNNNNNNNNNNSNDTTSSINSTTATNTNTTNTTTTNTTTTTTTTN) has biased composition (low complexity). In terms of domain architecture, BEACH spans 3491–3782 (AEVHGNILKM…QIFTKPHPKK (292 aa)). WD repeat units lie at residues 3868 to 3907 (VLNDDIICGDITKNGRLFVTGGTAGTVKVWKRCNNDGTIM), 3924 to 3963 (GHTNSILCVTVSQEYSIIVSGSKDSNCIIWDLNRLTYINS), 3984 to 4027 (TFET…LAKQ), 4029 to 4073 (FVND…KIRT), and 4075 to 4114 (VSKSTITALAVSKDNTQLISGDINGLIECLSSRSFDGYSS).

The protein localises to the membrane. It localises to the lysosome. The protein resides in the endosome. Its function is as follows. Involved in negative regulation of lysosome biogenesis, by limiting the heterotypic fusion of early endosomes and postlysosomal compartments. The polypeptide is BEACH domain-containing protein lvsB (lvsB) (Dictyostelium discoideum (Social amoeba)).